The sequence spans 256 residues: Cilia- and flagella-associated protein 410 (256 aa).

LRR repeat units lie at residues 19–40 (SVRK…QEMP), 41–62 (SLEV…SRCQ), and 63–84 (RLSE…FYLK). The LRRCT domain occupies 97–137 (NPCCGTSPHRYRMTVLRTLPRLQKLDNQAVTEEELSRALSE). 2 disordered regions span residues 129 to 156 (EELS…GGPK) and 168 to 212 (AETG…SSHR). Phosphoserine is present on residues serine 136 and serine 177.

In terms of assembly, found in a complex with CFAP410, NEK1 and SPATA7. Interacts with NEK1. As to expression, widely expressed. Expressed in the retina.

It is found in the mitochondrion. It localises to the cytoplasm. Its subcellular location is the cytoskeleton. The protein localises to the cilium basal body. The protein resides in the cell projection. It is found in the cilium. It localises to the photoreceptor outer segment. Its function is as follows. Plays a role in cilia formation and/or maintenance. Plays a role in the regulation of cell morphology and cytoskeletal organization. Involved in DNA damage repair. The chain is Cilia- and flagella-associated protein 410 from Homo sapiens (Human).